Consider the following 500-residue polypeptide: L-arabinose isomerase (500 aa).

Mn(2+) is bound by residues E306, E333, H350, and H450.

The protein belongs to the arabinose isomerase family. As to quaternary structure, homohexamer. Requires Mn(2+) as cofactor.

It carries out the reaction beta-L-arabinopyranose = L-ribulose. It functions in the pathway carbohydrate degradation; L-arabinose degradation via L-ribulose; D-xylulose 5-phosphate from L-arabinose (bacterial route): step 1/3. Catalyzes the conversion of L-arabinose to L-ribulose. The chain is L-arabinose isomerase from Shigella flexneri serotype 5b (strain 8401).